Here is a 699-residue protein sequence, read N- to C-terminus: DNA ligase (699 aa).

The disordered stretch occupies residues 1–20; sequence MTVQKPIESLSPAQAKREHR. Residues 43–47, 92–93, and E126 contribute to the NAD(+) site; these read DAEYD and SL. K128 serves as the catalytic N6-AMP-lysine intermediate. The NAD(+) site is built by R149, E185, K301, and K325. Residues C419, C422, C443, and C449 each coordinate Zn(2+). One can recognise a BRCT domain in the interval 621–699; it reads AKESPVAGKT…EEDWLKLVGE (79 aa).

It belongs to the NAD-dependent DNA ligase family. LigA subfamily. Requires Mg(2+) as cofactor. It depends on Mn(2+) as a cofactor.

It catalyses the reaction NAD(+) + (deoxyribonucleotide)n-3'-hydroxyl + 5'-phospho-(deoxyribonucleotide)m = (deoxyribonucleotide)n+m + AMP + beta-nicotinamide D-nucleotide.. In terms of biological role, DNA ligase that catalyzes the formation of phosphodiester linkages between 5'-phosphoryl and 3'-hydroxyl groups in double-stranded DNA using NAD as a coenzyme and as the energy source for the reaction. It is essential for DNA replication and repair of damaged DNA. The protein is DNA ligase of Beijerinckia indica subsp. indica (strain ATCC 9039 / DSM 1715 / NCIMB 8712).